The chain runs to 152 residues: Snaclec anticoagulant protein subunit A (152 aa).

Residues 1–23 (MGRFIFVSFGLLVVYLSLSGTAA) form the signal peptide. The C-type lectin domain occupies 24-152 (DCSSSWSSYE…EQRDPFVCEA (129 aa)). 3 disulfides stabilise this stretch: C25-C36, C53-C150, and C125-C142. Ca(2+) contacts are provided by S64, E66, and E70. E151 is a Ca(2+) binding site.

Belongs to the snaclec family. Heterodimer of subunits A and B; disulfide-linked. In terms of tissue distribution, expressed by the venom gland.

It localises to the secreted. Anticoagulant protein which binds to the gamma-carboxyglutamic acid-domain regions of factors IX and factor X in the presence of calcium with a 1 to 1 stoichiometry. Also inhibits platelet aggregation by binding to platelet glycoprotein Ibalpha (GP1BA) and functioning as a blocker of vWF. Is devoid of hemorrhagic and lethal activities. Possesses antithrombotic and thrombolytic activities. Also hydrolyzes the Aalpha-chain of fibrinogen. Does not affect the Bbeta-chain and the gamma chain. This chain is Snaclec anticoagulant protein subunit A, found in Deinagkistrodon acutus (Hundred-pace snake).